Here is a 235-residue protein sequence, read N- to C-terminus: Large ribosomal subunit protein uL1 (235 aa).

Belongs to the universal ribosomal protein uL1 family. In terms of assembly, part of the 50S ribosomal subunit.

In terms of biological role, binds directly to 23S rRNA. The L1 stalk is quite mobile in the ribosome, and is involved in E site tRNA release. Protein L1 is also a translational repressor protein, it controls the translation of the L11 operon by binding to its mRNA. The protein is Large ribosomal subunit protein uL1 of Prochlorococcus marinus (strain AS9601).